A 102-amino-acid polypeptide reads, in one-letter code: Small ubiquitin-related modifier 1 (102 aa).

Positions 21–98 constitute a Ubiquitin-like domain; it reads DYIKLKVIGQ…IEVYQEQTGG (78 aa). Gly98 is covalently cross-linked (Glycyl lysine isopeptide (Gly-Lys) (interchain with K-? in acceptor proteins)). Residues 99–102 constitute a propeptide that is removed on maturation; that stretch reads HSTI.

Belongs to the ubiquitin family. SUMO subfamily. In terms of assembly, interacts with sae2, ube2i, ranbp2, pias1 and pias2. Interacts with sox9 and sox10. Covalently attached to a number of proteins. In terms of processing, cleavage of precursor form by a sentrin-specific protease is necessary for function.

It localises to the nucleus membrane. The protein resides in the nucleus speckle. Its subcellular location is the cytoplasm. It is found in the nucleus. The protein localises to the PML body. It localises to the cell membrane. Ubiquitin-like protein that can be covalently attached to proteins as a monomer or a lysine-linked polymer. Covalent attachment via an isopeptide bond to its substrates requires prior activation by the E1 complex sae1-sae2 and linkage to the E2 enzyme ube2i. This post-translational modification on lysine residues of proteins plays a crucial role in a number of cellular processes such as nuclear transport, DNA replication and repair, mitosis and signal transduction. Polymeric sumo1 chains are also susceptible to polyubiquitination which functions as a signal for proteasomal degradation of modified proteins. The sequence is that of Small ubiquitin-related modifier 1 (sumo1) from Xenopus tropicalis (Western clawed frog).